A 238-amino-acid polypeptide reads, in one-letter code: Protein shisa-3 homolog (238 aa).

A signal peptide spans 1-21 (MGALLAFCLLVGLLRWGPAGA). Topologically, residues 22 to 98 (QQPGEYCHGW…GITAQPVYVP (77 aa)) are lumenal. Residues 99–119 (FLIVGSIFIAFIILGSLVAIY) form a helical membrane-spanning segment. The Cytoplasmic segment spans residues 120 to 238 (CCTCLRPKEP…GKSCPDFSSS (119 aa)).

This sequence belongs to the shisa family.

Its subcellular location is the endoplasmic reticulum membrane. Its function is as follows. Plays an essential role in the maturation of presomitic mesoderm cells by individual attenuation of both FGF and WNT signaling. The protein is Protein shisa-3 homolog (Shisa3) of Mus musculus (Mouse).